Reading from the N-terminus, the 436-residue chain is Glutamyl-tRNA(Gln) amidotransferase subunit D (436 aa).

The Asparaginase/glutaminase domain maps to 91–420 (QNISIISTGG…GEVAKLMNKN (330 aa)). Catalysis depends on residues Thr101, Thr177, Asp178, and Lys254.

Belongs to the asparaginase 1 family. GatD subfamily. As to quaternary structure, heterodimer of GatD and GatE.

The catalysed reaction is L-glutamyl-tRNA(Gln) + L-glutamine + ATP + H2O = L-glutaminyl-tRNA(Gln) + L-glutamate + ADP + phosphate + H(+). In terms of biological role, allows the formation of correctly charged Gln-tRNA(Gln) through the transamidation of misacylated Glu-tRNA(Gln) in organisms which lack glutaminyl-tRNA synthetase. The reaction takes place in the presence of glutamine and ATP through an activated gamma-phospho-Glu-tRNA(Gln). The GatDE system is specific for glutamate and does not act on aspartate. This chain is Glutamyl-tRNA(Gln) amidotransferase subunit D, found in Methanobrevibacter smithii (strain ATCC 35061 / DSM 861 / OCM 144 / PS).